The primary structure comprises 338 residues: Inositol 2-dehydrogenase 3 (338 aa).

The protein belongs to the Gfo/Idh/MocA family. Homotetramer.

It carries out the reaction myo-inositol + NAD(+) = scyllo-inosose + NADH + H(+). In terms of biological role, involved in the oxidation of myo-inositol (MI) to 2-keto-myo-inositol (2KMI or 2-inosose). This Saccharopolyspora erythraea (strain ATCC 11635 / DSM 40517 / JCM 4748 / NBRC 13426 / NCIMB 8594 / NRRL 2338) protein is Inositol 2-dehydrogenase 3.